The sequence spans 641 residues: SUMO-activating enzyme subunit 2-A (641 aa).

ATP contacts are provided by residues 24-29 (GAGGIG), D48, 56-59 (NLNR), K72, 95-96 (SI), and 117-122 (DNNAAR). 2 residues coordinate Zn(2+): C158 and C161. Residue C173 is the Glycyl thioester intermediate of the active site. C439 and C442 together coordinate Zn(2+). Residues 546 to 641 (GDVPEKGPQK…EEDDDIIALD (96 aa)) form a disordered region. Over residues 548–561 (VPEKGPQKPPEESV) the composition is skewed to basic and acidic residues. Positions 562–579 (KNITNGSDDGAQPSTSKA) are enriched in polar residues. Composition is skewed to acidic residues over residues 582–594 (QDDV…DEES) and 630–641 (PVEEDDDIIALD).

The protein belongs to the ubiquitin-activating E1 family. In terms of assembly, heterodimer of sae1 and uba2/sae2. The heterodimer corresponds to the two domains that are encoded on a single polypeptide chain in ubiquitin-activating enzyme E1. Interacts with ube2i.

The protein resides in the nucleus. It participates in protein modification; protein sumoylation. Functionally, the heterodimer acts as an E1 ligase for sumo1, sumo2, and sumo3. It mediates ATP-dependent activation of sumo proteins followed by formation of a thioester bond between a sumo protein and a conserved active site cysteine residue on uba2/sae2. This Xenopus laevis (African clawed frog) protein is SUMO-activating enzyme subunit 2-A (uba2-a).